The following is a 257-amino-acid chain: High-affinity copper transporter ctrC (257 aa).

A run of 2 helical transmembrane segments spans residues 79–99 (RGMFAGSCIGVICLVICLEFL) and 202–222 (YFNGYIIICIFIGAFLGSFIF).

Belongs to the copper transporter (Ctr) (TC 1.A.56) family. SLC31A subfamily.

The protein localises to the cell membrane. It catalyses the reaction Cu(2+)(in) = Cu(2+)(out). In terms of biological role, high-affinity copper transporter of plasma membrane that mediates copper uptake under low copper conditions. The mechanism driving the transmembrane transport of copper has still to be determined. Acts as a potential virulence factor. This is High-affinity copper transporter ctrC from Aspergillus fumigatus (strain ATCC MYA-4609 / CBS 101355 / FGSC A1100 / Af293) (Neosartorya fumigata).